A 313-amino-acid polypeptide reads, in one-letter code: Protochlorophyllide reductase (313 aa).

This sequence belongs to the short-chain dehydrogenases/reductases (SDR) family. POR subfamily.

Its subcellular location is the plastid. The protein resides in the chloroplast. It catalyses the reaction chlorophyllide a + NADP(+) = protochlorophyllide a + NADPH + H(+). Its pathway is porphyrin-containing compound metabolism; chlorophyll biosynthesis. Phototransformation of protochlorophyllide (Pchlide) to chlorophyllide (Chlide). This is Protochlorophyllide reductase from Avena sativa (Oat).